The chain runs to 273 residues: Formamidopyrimidine-DNA glycosylase (273 aa).

Proline 2 functions as the Schiff-base intermediate with DNA in the catalytic mechanism. Glutamate 3 acts as the Proton donor in catalysis. Lysine 58 (proton donor; for beta-elimination activity) is an active-site residue. 2 residues coordinate DNA: histidine 91 and arginine 110. An FPG-type zinc finger spans residues 238–272 (QVYGKTGQPCPRCASMIVKIKLGGRGTHLCPHCQK). Arginine 262 acts as the Proton donor; for delta-elimination activity in catalysis.

It belongs to the FPG family. As to quaternary structure, monomer. Zn(2+) is required as a cofactor.

The catalysed reaction is Hydrolysis of DNA containing ring-opened 7-methylguanine residues, releasing 2,6-diamino-4-hydroxy-5-(N-methyl)formamidopyrimidine.. It catalyses the reaction 2'-deoxyribonucleotide-(2'-deoxyribose 5'-phosphate)-2'-deoxyribonucleotide-DNA = a 3'-end 2'-deoxyribonucleotide-(2,3-dehydro-2,3-deoxyribose 5'-phosphate)-DNA + a 5'-end 5'-phospho-2'-deoxyribonucleoside-DNA + H(+). In terms of biological role, involved in base excision repair of DNA damaged by oxidation or by mutagenic agents. Acts as a DNA glycosylase that recognizes and removes damaged bases. Has a preference for oxidized purines, such as 7,8-dihydro-8-oxoguanine (8-oxoG). Has AP (apurinic/apyrimidinic) lyase activity and introduces nicks in the DNA strand. Cleaves the DNA backbone by beta-delta elimination to generate a single-strand break at the site of the removed base with both 3'- and 5'-phosphates. The chain is Formamidopyrimidine-DNA glycosylase from Streptococcus thermophilus (strain CNRZ 1066).